We begin with the raw amino-acid sequence, 312 residues long: Ribosomal protein L11 methyltransferase (312 aa).

S-adenosyl-L-methionine is bound by residues T160, G181, D203, and N246.

The protein belongs to the methyltransferase superfamily. PrmA family.

The protein resides in the cytoplasm. It catalyses the reaction L-lysyl-[protein] + 3 S-adenosyl-L-methionine = N(6),N(6),N(6)-trimethyl-L-lysyl-[protein] + 3 S-adenosyl-L-homocysteine + 3 H(+). In terms of biological role, methylates ribosomal protein L11. The chain is Ribosomal protein L11 methyltransferase from Staphylococcus aureus (strain bovine RF122 / ET3-1).